The chain runs to 479 residues: Beta-amyrin 28-monooxygenase (479 aa).

The helical transmembrane segment at 5-25 threads the bilayer; sequence FYLSLLLLFVTFISLSLFFIF. Cys-426 serves as a coordination point for heme.

The protein belongs to the cytochrome P450 family. The cofactor is heme. Expressed in roots, nodules and flowers.

The protein localises to the membrane. It carries out the reaction beta-amyrin + 3 reduced [NADPH--hemoprotein reductase] + 3 O2 = oleanolate + 3 oxidized [NADPH--hemoprotein reductase] + 4 H2O + 4 H(+). Functionally, catalyzes the carboxylation of beta-amyrin at the C-28 position to form oleanolic acid. Involved in an early step in the hemolytic saponin biosynthetic pathway. Catalyzes the carboxylation of alpha-amyrin and lupeol at the C-28 position to form ursolic acid and betulinic acid respectively. The protein is Beta-amyrin 28-monooxygenase of Medicago truncatula (Barrel medic).